The primary structure comprises 111 residues: Small ribosomal subunit protein bS6 (111 aa).

The protein belongs to the bacterial ribosomal protein bS6 family.

Its function is as follows. Binds together with bS18 to 16S ribosomal RNA. The chain is Small ribosomal subunit protein bS6 from Francisella philomiragia subsp. philomiragia (strain ATCC 25017 / CCUG 19701 / FSC 153 / O#319-036).